A 505-amino-acid polypeptide reads, in one-letter code: Glutamate--tRNA ligase (505 aa).

Residues 12-22 (PSPTGDPHVGT) carry the 'HIGH' region motif. Residues 253–257 (KLSKR) carry the 'KMSKS' region motif. Lysine 256 provides a ligand contact to ATP.

The protein belongs to the class-I aminoacyl-tRNA synthetase family. Glutamate--tRNA ligase type 1 subfamily. In terms of assembly, monomer.

The protein resides in the cytoplasm. It carries out the reaction tRNA(Glu) + L-glutamate + ATP = L-glutamyl-tRNA(Glu) + AMP + diphosphate. Its function is as follows. Catalyzes the attachment of glutamate to tRNA(Glu) in a two-step reaction: glutamate is first activated by ATP to form Glu-AMP and then transferred to the acceptor end of tRNA(Glu). The protein is Glutamate--tRNA ligase of Chlamydophila psittaci (strain ATCC VR-125 / 6BC) (Chlamydia psittaci).